The primary structure comprises 215 residues: Probable phosphoglycerate mutase GpmB (215 aa).

Substrate-binding positions include 8–15 (RHGETQWN), 21–22 (QG), Arg-58, 82–85 (ELDM), 104–105 (RR), and 151–152 (GM). His-9 acts as the Tele-phosphohistidine intermediate in catalysis. The Proton donor/acceptor role is filled by Glu-82.

It belongs to the phosphoglycerate mutase family. GpmB subfamily.

The enzyme catalyses (2R)-2-phosphoglycerate = (2R)-3-phosphoglycerate. It functions in the pathway carbohydrate degradation; glycolysis; pyruvate from D-glyceraldehyde 3-phosphate: step 3/5. This Cronobacter sakazakii (strain ATCC BAA-894) (Enterobacter sakazakii) protein is Probable phosphoglycerate mutase GpmB.